We begin with the raw amino-acid sequence, 345 residues long: N-acetyl-gamma-glutamyl-phosphate reductase (345 aa).

Residue Cys-149 is part of the active site.

This sequence belongs to the NAGSA dehydrogenase family. Type 1 subfamily.

The protein localises to the cytoplasm. It carries out the reaction N-acetyl-L-glutamate 5-semialdehyde + phosphate + NADP(+) = N-acetyl-L-glutamyl 5-phosphate + NADPH + H(+). It participates in amino-acid biosynthesis; L-arginine biosynthesis; N(2)-acetyl-L-ornithine from L-glutamate: step 3/4. In terms of biological role, catalyzes the NADPH-dependent reduction of N-acetyl-5-glutamyl phosphate to yield N-acetyl-L-glutamate 5-semialdehyde. In Bacillus cereus (strain 03BB102), this protein is N-acetyl-gamma-glutamyl-phosphate reductase.